The following is a 269-amino-acid chain: Arginine and glutamate-rich protein 1-B (269 aa).

Over residues 1–57 (MGRSRSRSSSRSKHSKTSKHSKKRSRSRSRSRDRERKRRSKSRESKRNRRRESRSRS) the composition is skewed to basic residues. Residues 1–70 (MGRSRSRSSS…TATSRRDRER (70 aa)) are necessary and sufficient for RNA binding. Disordered regions lie at residues 1-109 (MGRS…MERQ) and 233-269 (RMKLEQERQKQQKEEQKMILGKGKSRPKLSFSLKASE). Composition is skewed to basic and acidic residues over residues 64-80 (SRRDRERAASPPERIDI), 89-109 (SAVDEKQKKEEEEKKVEMERQ), and 233-249 (RMKLEQERQKQQKEEQK). Positions 71–269 (AASPPERIDI…KLSFSLKASE (199 aa)) are necessary and sufficient for transcriptional regulation.

It belongs to the ARGLU1 family.

It is found in the nucleus. Its subcellular location is the nucleus speckle. The protein localises to the chromosome. In terms of biological role, dual function regulator of gene expression; regulator of transcription and modulator of alternative splicing. General coactivator of nuclear receptor-induced gene expression. The polypeptide is Arginine and glutamate-rich protein 1-B (arglu1b) (Danio rerio (Zebrafish)).